Consider the following 435-residue polypeptide: tRNA-2-methylthio-N(6)-dimethylallyladenosine synthase (435 aa).

The region spanning 2–117 (KKASIITYGC…IPQAIEKIEN (116 aa)) is the MTTase N-terminal domain. Cys-11, Cys-47, Cys-80, Cys-154, Cys-158, and Cys-161 together coordinate [4Fe-4S] cluster. In terms of domain architecture, Radical SAM core spans 140–370 (FGSDQTASIS…MEVQNKCSFY (231 aa)). A TRAM domain is found at 373-435 (SKYKGRIVKV…KTWTLYGEIV (63 aa)).

It belongs to the methylthiotransferase family. MiaB subfamily. Monomer. [4Fe-4S] cluster serves as cofactor.

The protein resides in the cytoplasm. It carries out the reaction N(6)-dimethylallyladenosine(37) in tRNA + (sulfur carrier)-SH + AH2 + 2 S-adenosyl-L-methionine = 2-methylsulfanyl-N(6)-dimethylallyladenosine(37) in tRNA + (sulfur carrier)-H + 5'-deoxyadenosine + L-methionine + A + S-adenosyl-L-homocysteine + 2 H(+). In terms of biological role, catalyzes the methylthiolation of N6-(dimethylallyl)adenosine (i(6)A), leading to the formation of 2-methylthio-N6-(dimethylallyl)adenosine (ms(2)i(6)A) at position 37 in tRNAs that read codons beginning with uridine. In Fusobacterium nucleatum subsp. nucleatum (strain ATCC 25586 / DSM 15643 / BCRC 10681 / CIP 101130 / JCM 8532 / KCTC 2640 / LMG 13131 / VPI 4355), this protein is tRNA-2-methylthio-N(6)-dimethylallyladenosine synthase.